A 251-amino-acid polypeptide reads, in one-letter code: uncharacterized protein (251 aa).

5 consecutive transmembrane segments (helical) span residues 22-42 (FLGVIPLFFICFVFVIADIVI), 86-106 (FFLSAFAYIIFTFLGYNVILA), 120-140 (LASSVFLHVLAPIAFLVAGIV), 157-177 (LGYFMIYPLVYGLYLATIPYV), and 205-225 (IVAWPVVICFLFIYFPLSFLA).

The protein resides in the cell membrane. This is an uncharacterized protein from Mycoplasma pneumoniae (strain ATCC 29342 / M129 / Subtype 1) (Mycoplasmoides pneumoniae).